Reading from the N-terminus, the 427-residue chain is UDP-N-acetyl-D-mannosamine dehydrogenase (427 aa).

Residues Y19, I20, D39, R44, T91, and T130 each coordinate NAD(+). 8 residues coordinate UDP-N-acetyl-alpha-D-mannosaminouronate: R155, V156, K207, N211, R214, H245, R247, and G258. K207 (proton donor/acceptor) is an active-site residue. Catalysis depends on C261, which acts as the Nucleophile. Residues Y318 and K319 each coordinate UDP-N-acetyl-alpha-D-mannosaminouronate. R326 is an NAD(+) binding site. Residue K404 coordinates UDP-N-acetyl-alpha-D-mannosaminouronate.

Belongs to the UDP-glucose/GDP-mannose dehydrogenase family. In terms of assembly, homotetramer; probably dimer of dimers.

It catalyses the reaction UDP-N-acetyl-alpha-D-mannosamine + 2 NAD(+) + H2O = UDP-N-acetyl-alpha-D-mannosaminouronate + 2 NADH + 3 H(+). Its function is as follows. Catalyzes the four-electron oxidation of UDP-N-acetyl-D-mannosamine (UDP-ManNAc), reducing NAD(+) and releasing UDP-N-acetylmannosaminuronic acid (UDP-ManNAcA). The chain is UDP-N-acetyl-D-mannosamine dehydrogenase (wecC) from Methanococcus vannielii (strain ATCC 35089 / DSM 1224 / JCM 13029 / OCM 148 / SB).